A 1775-amino-acid chain; its full sequence is Protein TIC 214 (1775 aa).

The next 6 membrane-spanning stretches (helical) occupy residues 19-39 (IINS…FSIG), 68-88 (FIAG…HLAL), 91-111 (PHTI…WNNH), 133-153 (VFLN…SSML), 176-196 (VGWL…LVWI), and 227-247 (IFSI…PSPI). The disordered stretch occupies residues 1491 to 1512 (KESAGQGERESDNEKKKNLESA).

The protein belongs to the TIC214 family. In terms of assembly, part of the Tic complex.

The protein localises to the plastid. Its subcellular location is the chloroplast inner membrane. Functionally, involved in protein precursor import into chloroplasts. May be part of an intermediate translocation complex acting as a protein-conducting channel at the inner envelope. This is Protein TIC 214 from Lobularia maritima (Sweet alyssum).